Reading from the N-terminus, the 246-residue chain is mRNA-decapping protein g5R (246 aa).

In terms of domain architecture, Nudix hydrolase spans 93–239; sequence QKFRKNWLLP…IIGPAFNFIK (147 aa). A Nudix box motif is present at residues 128–149; that stretch reads GKPKEDESDLTCAIREFEEETG. Glutamate 134 serves as a coordination point for Mg(2+). The Nucleophile role is filled by glutamate 143. 2 residues coordinate Mg(2+): glutamate 147 and aspartate 169.

The protein belongs to the Nudix hydrolase family. DIPP subfamily. As to quaternary structure, interacts with host RPL23A. Mg(2+) serves as cofactor. It depends on Mn(2+) as a cofactor.

The protein localises to the host rough endoplasmic reticulum. It catalyses the reaction diphospho-myo-inositol polyphosphate + H2O = myo-inositol polyphosphate + phosphate.. Its function is as follows. Decapping enzyme required for the removal of the 5'-end m7GpppN cap tethered to viral and host mRNAs to allow their decay in cells. May therefore accelerate viral and cellular mRNA turnover to eliminate competing host mRNAs and allow stage-specific synthesis of viral proteins. Acceleration of the turnover of cellular transcripts may even promote the shutoff of host protein synthesis. In addition to the mRNA cap, g5R also efficiently hydrolyzes diphosphoinositol polyphosphates. Down-regulation of the level of PP-InsP5 (diphosphoinositol pentakisphosphate) may play a role in viral manipulation of the cellular secretory pathway, a step necessary for the formation of virions. Binds viral and cellular poly(A) mRNAs, thereby decreasing both types of mRNAs. In African swine fever virus (isolate Warthog/Namibia/Wart80/1980) (ASFV), this protein is mRNA-decapping protein g5R.